A 90-amino-acid chain; its full sequence is Arminin 7722 (90 aa).

A signal peptide spans 1 to 18 (MRSASLILFVAIVALTYA). A propeptide spanning residues 19–59 (RSYEDIKEEIRNEVENEILDDLEEENDELDDNAQEVSDPRA) is cleaved from the precursor. Threonine amide is present on threonine 87.

Belongs to the arminin family. As to expression, expressed in entodermal epithelium along the body column.

It localises to the secreted. The protein resides in the target cell membrane. Functionally, antimicrobial peptide with a broad-spectrum antimicrobial activity. Keeps its antibacterial activity under a wide range of salt concentrations that mimic physiological conditions of human blood, which is surprising, since Hydra is an obligate freshwater animal with nearly no salt tolerance. Does not affect red blood cells. The polypeptide is Arminin 7722 (Hydra vulgaris (Hydra)).